The sequence spans 290 residues: RWD domain-containing protein 2B (290 aa).

The region spanning 12 to 136 (SELDLLASMF…EWVKEHAFDY (125 aa)) is the RWD domain.

The sequence is that of RWD domain-containing protein 2B (Rwdd2b) from Mus musculus (Mouse).